A 219-amino-acid chain; its full sequence is Proteasome subunit beta type-9 (219 aa).

The propeptide at Met-1–Gly-20 is removed in mature form. Thr-21 functions as the Nucleophile in the catalytic mechanism. N6-acetyllysine occurs at positions 53 and 109.

This sequence belongs to the peptidase T1B family. The 26S proteasome consists of a 20S proteasome core and two 19S regulatory subunits. The 20S proteasome core is composed of 28 subunits that are arranged in four stacked rings, resulting in a barrel-shaped structure. The two end rings are each formed by seven alpha subunits, and the two central rings are each formed by seven beta subunits. The catalytic chamber with the active sites is on the inside of the barrel. Component of the immunoproteasome, where it displaces the equivalent housekeeping subunit PSMB6. Component of the spermatoproteasome, a form of the proteasome specifically found in testis. Autocleaved. The resulting N-terminal Thr residue of the mature subunit is responsible for the nucleophile proteolytic activity.

It is found in the cytoplasm. Its subcellular location is the nucleus. It catalyses the reaction Cleavage of peptide bonds with very broad specificity.. The proteasome is a multicatalytic proteinase complex which is characterized by its ability to cleave peptides with Arg, Phe, Tyr, Leu, and Glu adjacent to the leaving group at neutral or slightly basic pH. The proteasome has an ATP-dependent proteolytic activity. This subunit is involved in antigen processing to generate class I binding peptides. The chain is Proteasome subunit beta type-9 (Psmb9) from Mus spicilegus (Steppe mouse).